Here is a 121-residue protein sequence, read N- to C-terminus: Pro-glucagon (121 aa).

The signal sequence occupies residues 1–21 (MKGAQYLAGLLLLLFVQNSIC). The propeptide occupies 80 to 85 (SNGGSA).

Belongs to the glucagon family.

It is found in the secreted. Functionally, plays a key role in glucose metabolism and homeostasis. Regulates blood glucose by increasing gluconeogenesis and decreasing glycolysis. The chain is Pro-glucagon (gcg) from Carassius auratus (Goldfish).